The sequence spans 356 residues: Staphylococcal superantigen-like 3 (356 aa).

The first 30 residues, 1 to 30 (MKMRTIAKTSLALGLLTTGAITVTTQSVKA), serve as a signal peptide directing secretion. Positions 61 to 165 (ATTQAANTRQ…TIKQAQTDMT (105 aa)) are disordered. Positions 69-104 (RQERTPKLEKAPNTNEEKTSASKIEKISQPKQEEQK) are enriched in basic and acidic residues. Positions 114–141 (PKQEQSQTTTESTTPKTKVTTPPSTNTP) are enriched in low complexity. The segment covering 142–164 (QPMQSTKSDTPQSPTIKQAQTDM) has biased composition (polar residues). Positions 228–326 (IDVFIVLEDN…VIKMKNGGKY (99 aa)) are sialyl Lewis X-binding.

Belongs to the staphylococcal/streptococcal toxin family. As to quaternary structure, interacts with host TLR2 (via its extracellular domain).

It is found in the secreted. Its function is as follows. Secreted protein that plays an essential role in immune innate response inhibition by interacting with and inhibiting host TLR2. In turn, bacteria recognition by immune cells is impaired and cytokine production is inhibited. Mechanistically, by interacting with TLR2, blocks ligand binding and thus inhibits activation. Second, by interacting with an already formed TLR2-lipopeptide complex, prevents TLR heterodimerization and downstream signaling. The interaction with host TLR2 does not involve sialyl Lewis X interactions. This Staphylococcus aureus (strain NCTC 8325 / PS 47) protein is Staphylococcal superantigen-like 3.